The chain runs to 372 residues: Tribbles homolog 1 (372 aa).

Disordered regions lie at residues 1-23 and 52-86; these read MRVG…ALLF and ECSS…GSAP. A compositionally biased stretch (pro residues) spans 59–75; sequence YLSPPGSPCSPQPPPAA. Residues 91-338 enclose the Protein kinase domain; the sequence is IADYLLLPLA…APEILLHPWF (248 aa). Positions 355–360 match the COP1-binding motif; that stretch reads DQIVPE.

The protein belongs to the protein kinase superfamily. CAMK Ser/Thr protein kinase family. Tribbles subfamily. In terms of assembly, monomer. Interacts (via protein kinase domain) with CEBPA. Interacts with COP1. As to expression, expressed in most human tissues with the highest levels in skeletal muscle, thyroid gland, pancreas, peripheral blood leukocytes, and bone marrow.

Functionally, adapter protein involved in protein degradation by interacting with COP1 ubiquitin ligase. The COP1-binding motif is masked by autoinhibitory interactions with the protein kinase domain. Serves to alter COP1 substrate specificity by directing the activity of COP1 toward CEBPA. Binds selectively the recognition sequence of CEBPA. Regulates myeloid cell differentiation by altering the expression of CEBPA in a COP1-dependent manner. Controls macrophage, eosinophil and neutrophil differentiation via the COP1-binding domain. Interacts with MAPK kinases and regulates activation of MAP kinases, but has no kinase activity. The chain is Tribbles homolog 1 from Homo sapiens (Human).